The following is a 455-amino-acid chain: Deoxyribodipyrimidine photo-lyase (455 aa).

Positions 2-131 constitute a Photolyase/cryptochrome alpha/beta domain; sequence SVAVVLFTSD…ELHVHDAVVT (130 aa). FAD is bound by residues Tyr-219 and 231–235; that span reads TSRLS. 2 interaction with DNA regions span residues 266-273 and 330-331; these read QLAWRDFH and NR. An FAD-binding site is contributed by 361–363; it reads DGD. A DNA-binding site is contributed by Gln-392.

It belongs to the DNA photolyase class-1 family. As to quaternary structure, monomer. Requires FAD as cofactor. The cofactor is coenzyme F420-(gamma-Glu)n.

It carries out the reaction cyclobutadipyrimidine (in DNA) = 2 pyrimidine residues (in DNA).. Involved in repair of UV radiation-induced DNA damage. Catalyzes the light-dependent monomerization (300-600 nm) of cyclobutyl pyrimidine dimers (in cis-syn configuration), which are formed between adjacent bases on the same DNA strand upon exposure to ultraviolet radiation. The polypeptide is Deoxyribodipyrimidine photo-lyase (phr) (Streptomyces griseus).